A 55-amino-acid chain; its full sequence is Large ribosomal subunit protein bL33 (55 aa).

This sequence belongs to the bacterial ribosomal protein bL33 family.

The protein is Large ribosomal subunit protein bL33 of Hyphomonas neptunium (strain ATCC 15444).